We begin with the raw amino-acid sequence, 408 residues long: Biphenyl dioxygenase system ferredoxin--NAD(+) reductase component (408 aa).

4 to 35 (TIAIIGAGLAGSTAARALRAQGYEGRIHLLGD) is a binding site for FAD. Residue 145 to 173 (SLVIVGGGLIGCEVATTARKLSVHVTILE) coordinates NAD(+).

It belongs to the bacterial ring-hydroxylating dioxygenase ferredoxin reductase family. In terms of assembly, this dioxygenase system consists of four proteins: the two subunits of the hydroxylase component (BphA and BphE), a ferredoxin (BphF) and a ferredoxin reductase (BphG). The cofactor is FAD.

The catalysed reaction is 2 reduced [2Fe-2S]-[ferredoxin] + NAD(+) + H(+) = 2 oxidized [2Fe-2S]-[ferredoxin] + NADH. It functions in the pathway xenobiotic degradation; biphenyl degradation. In terms of biological role, part of the electron transfer component of biphenyl dioxygenase, transfers electrons from ferredoxin (BphF) to NADH. This chain is Biphenyl dioxygenase system ferredoxin--NAD(+) reductase component (bphG), found in Paraburkholderia xenovorans (strain LB400).